Consider the following 375-residue polypeptide: MAKADFYETLGVAKSADEKELKSAFRKLAMKYHPDKNPDDKDAERKFKEINEAYEMLKDPQKRAAYDRYGHAAFEHGGMGGGGGGFAGGGFSDIFEDIFGEMMGGGRARQRSSGGRERGADLRYNMEITLEESFSGKTAQIRVPTSITCDVCSGSGAKPGTQPKNCGTCQGTGRVRAAQGFFSIERTCPTCHGRGQIIPDPCPKCHGQGRVTEERSLSVNIPAGIEDGTRIRLQGEGEAGARGGPAGDLYIFLSVKPHEFYQRDGADLYCAVPISMTTAALGGTFDVATLDGTKSRVTVPEGTQVGKQFRLKGKGMPVLRSVQTGDLYIQIQIETPQKLTKRQRELLQEFEQLSSKENNPESTGFFARMKEFFEG.

Residues 5 to 70 (DFYETLGVAK…QKRAAYDRYG (66 aa)) enclose the J domain. The segment at 136–214 (GKTAQIRVPT…CHGQGRVTEE (79 aa)) adopts a CR-type zinc-finger fold. Zn(2+) contacts are provided by Cys-149, Cys-152, Cys-166, Cys-169, Cys-188, Cys-191, Cys-202, and Cys-205. CXXCXGXG motif repeat units lie at residues 149–156 (CDVCSGSG), 166–173 (CGTCQGTG), 188–195 (CPTCHGRG), and 202–209 (CPKCHGQG).

The protein belongs to the DnaJ family. Homodimer. It depends on Zn(2+) as a cofactor.

The protein localises to the cytoplasm. Its function is as follows. Participates actively in the response to hyperosmotic and heat shock by preventing the aggregation of stress-denatured proteins and by disaggregating proteins, also in an autonomous, DnaK-independent fashion. Unfolded proteins bind initially to DnaJ; upon interaction with the DnaJ-bound protein, DnaK hydrolyzes its bound ATP, resulting in the formation of a stable complex. GrpE releases ADP from DnaK; ATP binding to DnaK triggers the release of the substrate protein, thus completing the reaction cycle. Several rounds of ATP-dependent interactions between DnaJ, DnaK and GrpE are required for fully efficient folding. Also involved, together with DnaK and GrpE, in the DNA replication of plasmids through activation of initiation proteins. This chain is Chaperone protein DnaJ, found in Rhizobium johnstonii (strain DSM 114642 / LMG 32736 / 3841) (Rhizobium leguminosarum bv. viciae).